The chain runs to 264 residues: H-2 class II histocompatibility antigen, I-A beta chain (264 aa).

The N-terminal stretch at 1 to 31 (MVWLPRVPCVAAVILLLTVLSPPVALVRDSR) is a signal peptide. Residues 32 to 121 (PWFLEYCKSE…IFDNFLVPRR (90 aa)) form a beta-1 region. Residues 32–225 (PWFLEYCKSE…KAQSTSAQNK (194 aa)) lie on the Extracellular side of the membrane. 2 disulfide bridges follow: C42/C106 and C144/C200. N-linked (GlcNAc...) asparagine glycosylation is present at N46. Residues 122-215 (VEPTVTVYPT…SLTDPVTVEW (94 aa)) form a beta-2 region. The region spanning 124-214 (PTVTVYPTKT…PSLTDPVTVE (91 aa)) is the Ig-like C1-type domain. The tract at residues 216–225 (KAQSTSAQNK) is connecting peptide. Residues 226–248 (MLSGVGGFVLGLLFLRAGLFIYF) form a helical membrane-spanning segment. The Cytoplasmic segment spans residues 249-264 (RNQKGQSGLQPTGLLS).

The protein belongs to the MHC class II family. Post-translationally, ubiquitinated in immature dendritic cells leading to down-regulation of MHC class II.

It localises to the membrane. The protein is H-2 class II histocompatibility antigen, I-A beta chain (H2-Eb1) of Mus musculus (Mouse).